A 141-amino-acid chain; its full sequence is Flagellar assembly factor FliW 1 (141 aa).

This sequence belongs to the FliW family. Interacts with translational regulator CsrA and flagellin(s).

Its subcellular location is the cytoplasm. Functionally, acts as an anti-CsrA protein, binds CsrA and prevents it from repressing translation of its target genes, one of which is flagellin. Binds to flagellin and participates in the assembly of the flagellum. The sequence is that of Flagellar assembly factor FliW 1 from Desulfotalea psychrophila (strain LSv54 / DSM 12343).